The chain runs to 558 residues: MESEKILMAAGVTVAAVVGAFVFWGPSGSRLRQRRGQIAGLHNFGLTCFLNTLLQAMAACPQFIAWLQLYNNASPDRKSLITSMLNTLEVVNGTHATLRGDPYSPGAVLRALNALGWVIPQEEHDAHELFHVLLTCLEEEAIRPQPLGCLSDALPTDNDDNSSLAGTATPVGGFRSFSSMAAGLGASQRIGDQPNRPSSAMLTDFLNMEYDESTSLQRLVRSEAHTPDSPASVCERDGNDRLGSVLLDAVSPGTPFGFPLVSNPDSLATPMLGGERSSRPRLPQSQQQQDEGLNRRVSSSCRSLERLHRGPGRVSIWSNMMPSQVAHPFQGAMGAQIVCNGCGSKSAVRYDKFDSITLNLPPQRRTGLSLGHLLSEYITSEDLSDVKCDSCNETTTHTKSVTFAKLPACLCIHVARTVWLPTGQVCKRKDYVHFPESLSMAPYSFVQPHLNSQAGTPWGSTMSLYSSSLPMNNGVGGGEGFGTMFPKNLYRLLAVVVHSGEANSGHFVTYRRGSLRNAHRWYYTSDTIVREVSIDEVLSVPAYLLFYDRGQQRQLNLR.

Residues 6–26 (ILMAAGVTVAAVVGAFVFWGP) traverse the membrane as a helical segment. Residues 39-550 (AGLHNFGLTC…PAYLLFYDRG (512 aa)) enclose the USP domain. The active-site Nucleophile is the Cys-48. Residues 267–300 (LATPMLGGERSSRPRLPQSQQQQDEGLNRRVSSS) form a disordered region. Residues 280-289 (PRLPQSQQQQ) are compositionally biased toward low complexity. Catalysis depends on His-506, which acts as the Proton acceptor.

This sequence belongs to the peptidase C19 family.

It localises to the mitochondrion outer membrane. It carries out the reaction Thiol-dependent hydrolysis of ester, thioester, amide, peptide and isopeptide bonds formed by the C-terminal Gly of ubiquitin (a 76-residue protein attached to proteins as an intracellular targeting signal).. In terms of biological role, deubiquitinating enzyme that acts as a key inhibitor of mitophagy by counteracting the action of parkin (park). In Drosophila melanogaster (Fruit fly), this protein is Ubiquitin carboxyl-terminal hydrolase 30 homolog.